We begin with the raw amino-acid sequence, 295 residues long: Putative sugar uptake protein YxfA (295 aa).

A run of 10 helical transmembrane segments spans residues 4–26, 33–50, 54–72, 85–107, 117–135, 156–178, 188–206, 213–235, 241–263, and 270–291; these read VLLA…KFGG, LGMT…FLFR, LTWQ…WAIG, VSVA…GVFA, FILG…YFSA, ALTY…AVLW, IILP…MGRF, YVYQ…LMAA, AIAF…LFLG, and ELVY…LAIV.

This sequence belongs to the GRP transporter (TC 2.A.7.5) family.

It localises to the cell membrane. The chain is Putative sugar uptake protein YxfA (yxfA) from Lactococcus lactis subsp. lactis (strain IL1403) (Streptococcus lactis).